The primary structure comprises 353 residues: Photosystem II protein D1 (353 aa).

Threonine 2 is modified (N-acetylthreonine). At threonine 2 the chain carries Phosphothreonine. A run of 3 helical transmembrane segments spans residues 29 to 46, 118 to 133, and 142 to 156; these read YIGW…TATS, HFLL…EWEL, and WIAV…AATA. Histidine 118 lines the chlorophyll a pocket. Tyrosine 126 contributes to the pheophytin a binding site. [CaMn4O5] cluster is bound by residues aspartate 170 and glutamate 189. Residues 197-218 traverse the membrane as a helical segment; sequence FHMLGVAGVFGGSLFSAMHGSL. A chlorophyll a-binding site is contributed by histidine 198. A quinone-binding positions include histidine 215 and 264–265; that span reads SF. Residue histidine 215 participates in Fe cation binding. A Fe cation-binding site is contributed by histidine 272. A helical transmembrane segment spans residues 274–288; the sequence is FLAAWPVVGIWFTAL. Residues histidine 332, glutamate 333, aspartate 342, and alanine 344 each coordinate [CaMn4O5] cluster. Positions 345–353 are excised as a propeptide; sequence AVEVPAING.

This sequence belongs to the reaction center PufL/M/PsbA/D family. PSII is composed of 1 copy each of membrane proteins PsbA, PsbB, PsbC, PsbD, PsbE, PsbF, PsbH, PsbI, PsbJ, PsbK, PsbL, PsbM, PsbT, PsbX, PsbY, PsbZ, Psb30/Ycf12, at least 3 peripheral proteins of the oxygen-evolving complex and a large number of cofactors. It forms dimeric complexes. Requires The D1/D2 heterodimer binds P680, chlorophylls that are the primary electron donor of PSII, and subsequent electron acceptors. It shares a non-heme iron and each subunit binds pheophytin, quinone, additional chlorophylls, carotenoids and lipids. D1 provides most of the ligands for the Mn4-Ca-O5 cluster of the oxygen-evolving complex (OEC). There is also a Cl(-1) ion associated with D1 and D2, which is required for oxygen evolution. The PSII complex binds additional chlorophylls, carotenoids and specific lipids. as cofactor. Post-translationally, tyr-161 forms a radical intermediate that is referred to as redox-active TyrZ, YZ or Y-Z. In terms of processing, C-terminally processed by CTPA; processing is essential to allow assembly of the oxygen-evolving complex and thus photosynthetic growth.

It localises to the plastid. It is found in the chloroplast thylakoid membrane. The enzyme catalyses 2 a plastoquinone + 4 hnu + 2 H2O = 2 a plastoquinol + O2. Its function is as follows. Photosystem II (PSII) is a light-driven water:plastoquinone oxidoreductase that uses light energy to abstract electrons from H(2)O, generating O(2) and a proton gradient subsequently used for ATP formation. It consists of a core antenna complex that captures photons, and an electron transfer chain that converts photonic excitation into a charge separation. The D1/D2 (PsbA/PsbD) reaction center heterodimer binds P680, the primary electron donor of PSII as well as several subsequent electron acceptors. In Hordeum vulgare (Barley), this protein is Photosystem II protein D1.